Here is a 281-residue protein sequence, read N- to C-terminus: Elongation factor 1-delta (281 aa).

N-acetylalanine is present on alanine 2. An N6-acetyllysine modification is found at lysine 17. Phosphoserine is present on residues serine 37, serine 44, serine 60, serine 86, and serine 106. A leucine-zipper region spans residues 80–115; sequence LIVRIASLEVENQNLRGVVQDLQQAISKLEVRLSTL. Lysine 107 bears the N6-acetyllysine mark. Over residues 115–132 the composition is skewed to polar residues; that stretch reads LEKSSPTHRATAPQTQHV. Residues 115-172 form a disordered region; it reads LEKSSPTHRATAPQTQHVSPMRQVEPPAKKGATPAEDDEDNDIDLFGSDEEEEDKEAA. At lysine 117 the chain carries N6-acetyllysine; alternate. Lysine 117 bears the N6-succinyllysine; alternate mark. Serine 119 bears the Phosphoserine mark. At threonine 129 the chain carries Phosphothreonine. Phosphoserine is present on serine 133. Threonine 147 bears the Phosphothreonine mark. Residues 149 to 169 are compositionally biased toward acidic residues; it reads AEDDEDNDIDLFGSDEEEEDK. Serine 162 carries the phosphoserine; by CK2 modification. The interval 173 to 281 is catalytic (GEF); that stretch reads RLREERLRQY…SVDIAAFNKI (109 aa).

Belongs to the EF-1-beta/EF-1-delta family. EF-1 is composed of 4 subunits: alpha, beta, delta isoform 1, and gamma. Isoform 2 interacts with HSF1 and NFE2L2.

It is found in the nucleus. EF-1-beta and EF-1-delta stimulate the exchange of GDP bound to EF-1-alpha to GTP, regenerating EF-1-alpha for another round of transfer of aminoacyl-tRNAs to the ribosome. Functionally, regulates induction of heat-shock-responsive genes through association with heat shock transcription factors and direct DNA-binding at heat shock promoter elements (HSE). This Rattus norvegicus (Rat) protein is Elongation factor 1-delta (Eef1d).